The sequence spans 312 residues: Pectin lyase (312 aa).

Arg-201 is an active-site residue. A disordered region spans residues 254–274; it reads GSGTFTDTNSVPPITNQKSPK. Polar residues predominate over residues 256–274; the sequence is GTFTDTNSVPPITNQKSPK.

Belongs to the polysaccharide lyase 1 family.

It carries out the reaction Eliminative cleavage of (1-&gt;4)-alpha-D-galacturonan methyl ester to give oligosaccharides with 4-deoxy-6-O-methyl-alpha-D-galact-4-enuronosyl groups at their non-reducing ends.. The sequence is that of Pectin lyase (pnl) from Pseudomonas marginalis (Pseudomonas panacis).